The chain runs to 146 residues: Holo-[acyl-carrier-protein] synthase (146 aa).

Positions 9 and 63 each coordinate Mg(2+).

It belongs to the P-Pant transferase superfamily. AcpS family. The cofactor is Mg(2+).

The protein resides in the cytoplasm. The catalysed reaction is apo-[ACP] + CoA = holo-[ACP] + adenosine 3',5'-bisphosphate + H(+). Transfers the 4'-phosphopantetheine moiety from coenzyme A to a Ser of acyl-carrier-protein. In Burkholderia orbicola (strain MC0-3), this protein is Holo-[acyl-carrier-protein] synthase.